The following is a 108-amino-acid chain: Nucleoid-associated protein Bpet3552 (108 aa).

The protein belongs to the YbaB/EbfC family. In terms of assembly, homodimer.

The protein resides in the cytoplasm. Its subcellular location is the nucleoid. Functionally, binds to DNA and alters its conformation. May be involved in regulation of gene expression, nucleoid organization and DNA protection. This chain is Nucleoid-associated protein Bpet3552, found in Bordetella petrii (strain ATCC BAA-461 / DSM 12804 / CCUG 43448).